The sequence spans 259 residues: Phosphatidylglycerol--prolipoprotein diacylglyceryl transferase (259 aa).

A run of 4 helical transmembrane segments spans residues 12–32 (LAIH…VYLA), 41–61 (ISSD…IVGA), 80–100 (IIAI…GALV), and 109–129 (VLNP…AQAI). Residue arginine 131 participates in a 1,2-diacyl-sn-glycero-3-phospho-(1'-sn-glycerol) binding. 3 helical membrane passes run 167–187 (IPTF…IMMW), 194–214 (LLDG…RLVI), and 226–246 (GIRI…IFVI).

Belongs to the Lgt family.

The protein localises to the cell membrane. It catalyses the reaction L-cysteinyl-[prolipoprotein] + a 1,2-diacyl-sn-glycero-3-phospho-(1'-sn-glycerol) = an S-1,2-diacyl-sn-glyceryl-L-cysteinyl-[prolipoprotein] + sn-glycerol 1-phosphate + H(+). It functions in the pathway protein modification; lipoprotein biosynthesis (diacylglyceryl transfer). Its function is as follows. Catalyzes the transfer of the diacylglyceryl group from phosphatidylglycerol to the sulfhydryl group of the N-terminal cysteine of a prolipoprotein, the first step in the formation of mature lipoproteins. This is Phosphatidylglycerol--prolipoprotein diacylglyceryl transferase from Streptococcus pyogenes serotype M3 (strain ATCC BAA-595 / MGAS315).